Here is an 89-residue protein sequence, read N- to C-terminus: Small ribosomal subunit protein uS15 (89 aa).

It belongs to the universal ribosomal protein uS15 family. Part of the 30S ribosomal subunit. Forms a bridge to the 50S subunit in the 70S ribosome, contacting the 23S rRNA.

One of the primary rRNA binding proteins, it binds directly to 16S rRNA where it helps nucleate assembly of the platform of the 30S subunit by binding and bridging several RNA helices of the 16S rRNA. Functionally, forms an intersubunit bridge (bridge B4) with the 23S rRNA of the 50S subunit in the ribosome. The sequence is that of Small ribosomal subunit protein uS15 from Acidiphilium cryptum (strain JF-5).